Reading from the N-terminus, the 122-residue chain is UPF0102 protein XOO3839 (122 aa).

Belongs to the UPF0102 family.

In Xanthomonas oryzae pv. oryzae (strain KACC10331 / KXO85), this protein is UPF0102 protein XOO3839.